The chain runs to 475 residues: MSPQTETKASVGFKAGVKDYKLTYYTPEYETKDTDILAAFRVTPQPGVPPEEAGAAVAAESSTGTWTTVWTDGLTSLDRYKGRCYHIEPVAGEESQFIAYVAYPLDLFEEGSVTNMFTSIVGNVFGFKALRALRLEDLRIPPAYSKTFQGPPHGIQVERDKLNKYGRPLLGCTIKPKLGLSAKNYGRAVYECLRGGLDFTKDDENVNSQPFMRWRDRFLFCAEAIYKAQAETGEIKGHYLNATAGTCEEMIKRAVFARELGVPIVMHDYLTGGFTANTSLAHYCRDNGLLLHIHRAMHAVIDRQKNHGMHFRVLAKALRMSGGDHIHAGTVVGKLEGEREITLGFVDLLRDDFIEKDRSRGIYFTQDWVSLPGVLPVASGGIHVWHMPALTEIFGDDSVLQFGGGTLGHPWGNAPGAVANRVALEACVQARNEGRDLAREGNEIIREASKWSPELAAACEVWKEIKFEFEAMDTL.

A propeptide spanning residues 1 to 2 is cleaved from the precursor; it reads MS. P3 carries the post-translational modification N-acetylproline. K14 is modified (N6,N6,N6-trimethyllysine). Substrate is bound by residues N123 and T173. The Proton acceptor role is filled by K175. K177 lines the substrate pocket. Mg(2+) contacts are provided by K201, D203, and E204. K201 is subject to N6-carboxylysine. The active-site Proton acceptor is the H294. Residues R295, H327, and S379 each contribute to the substrate site.

It belongs to the RuBisCO large chain family. Type I subfamily. As to quaternary structure, heterohexadecamer of 8 large chains and 8 small chains; disulfide-linked. The disulfide link is formed within the large subunit homodimers. Requires Mg(2+) as cofactor. In terms of processing, the disulfide bond which can form in the large chain dimeric partners within the hexadecamer appears to be associated with oxidative stress and protein turnover.

Its subcellular location is the plastid. The protein resides in the chloroplast. The enzyme catalyses 2 (2R)-3-phosphoglycerate + 2 H(+) = D-ribulose 1,5-bisphosphate + CO2 + H2O. The catalysed reaction is D-ribulose 1,5-bisphosphate + O2 = 2-phosphoglycolate + (2R)-3-phosphoglycerate + 2 H(+). Its function is as follows. RuBisCO catalyzes two reactions: the carboxylation of D-ribulose 1,5-bisphosphate, the primary event in carbon dioxide fixation, as well as the oxidative fragmentation of the pentose substrate in the photorespiration process. Both reactions occur simultaneously and in competition at the same active site. The chain is Ribulose bisphosphate carboxylase large chain from Liquidambar styraciflua (Sweetgum tree).